We begin with the raw amino-acid sequence, 229 residues long: Leucyl/phenylalanyl-tRNA--protein transferase (229 aa).

This sequence belongs to the L/F-transferase family.

It is found in the cytoplasm. It carries out the reaction N-terminal L-lysyl-[protein] + L-leucyl-tRNA(Leu) = N-terminal L-leucyl-L-lysyl-[protein] + tRNA(Leu) + H(+). It catalyses the reaction N-terminal L-arginyl-[protein] + L-leucyl-tRNA(Leu) = N-terminal L-leucyl-L-arginyl-[protein] + tRNA(Leu) + H(+). The enzyme catalyses L-phenylalanyl-tRNA(Phe) + an N-terminal L-alpha-aminoacyl-[protein] = an N-terminal L-phenylalanyl-L-alpha-aminoacyl-[protein] + tRNA(Phe). In terms of biological role, functions in the N-end rule pathway of protein degradation where it conjugates Leu, Phe and, less efficiently, Met from aminoacyl-tRNAs to the N-termini of proteins containing an N-terminal arginine or lysine. The protein is Leucyl/phenylalanyl-tRNA--protein transferase of Pseudomonas syringae pv. syringae (strain B728a).